A 206-amino-acid chain; its full sequence is Sclerostin domain-containing protein 1 (206 aa).

The N-terminal stretch at 1–23 (MLPPAIHLSLIPLLCILMRNCLA) is a signal peptide. A disordered region spans residues 42–62 (AHPSSNSTLNQARNGGRHFSS). Residues 44-62 (PSSNSTLNQARNGGRHFSS) show a composition bias toward polar residues. N-linked (GlcNAc...) asparagine glycosylation is present at Asn-47. Cystine bridges form between Cys-75–Cys-133, Cys-89–Cys-147, Cys-100–Cys-163, and Cys-104–Cys-165. The CTCK domain maps to 75 to 170 (CRELRSTKYI…TACKCKRYTR (96 aa)). N-linked (GlcNAc...) asparagine glycosylation is present at Asn-173. Residues 176–206 (SHNFESVSPAKPAQHHRERKRASKSSKHSLS) are disordered. Residues 188-206 (AQHHRERKRASKSSKHSLS) show a composition bias toward basic residues.

This sequence belongs to the sclerostin family. Interacts with BMP2, BMP4, BMP6 and BMP7 with high affinity. In terms of tissue distribution, highly expressed in kidney at renal collecting ducts level and weakly in brain.

It is found in the secreted. Its function is as follows. May be involved in the onset of endometrial receptivity for implantation/sensitization for the decidual cell reaction. Enhances Wnt signaling and inhibits TGF-beta signaling. Directly antagonizes activity of BMP2, BMP4, BMP6 and BMP7 in a dose-dependent manner. The protein is Sclerostin domain-containing protein 1 (Sostdc1) of Mus musculus (Mouse).